The sequence spans 250 residues: Ribosomal RNA small subunit methyltransferase J (250 aa).

S-adenosyl-L-methionine is bound by residues 101-102 (RD), 117-118 (ER), 153-154 (SS), and D171.

Belongs to the methyltransferase superfamily. RsmJ family.

The protein localises to the cytoplasm. The catalysed reaction is guanosine(1516) in 16S rRNA + S-adenosyl-L-methionine = N(2)-methylguanosine(1516) in 16S rRNA + S-adenosyl-L-homocysteine + H(+). Specifically methylates the guanosine in position 1516 of 16S rRNA. This chain is Ribosomal RNA small subunit methyltransferase J, found in Cronobacter sakazakii (strain ATCC BAA-894) (Enterobacter sakazakii).